We begin with the raw amino-acid sequence, 177 residues long: Large ribosomal subunit protein uL6 (177 aa).

The protein belongs to the universal ribosomal protein uL6 family. As to quaternary structure, part of the 50S ribosomal subunit.

Functionally, this protein binds to the 23S rRNA, and is important in its secondary structure. It is located near the subunit interface in the base of the L7/L12 stalk, and near the tRNA binding site of the peptidyltransferase center. The chain is Large ribosomal subunit protein uL6 from Shewanella amazonensis (strain ATCC BAA-1098 / SB2B).